The following is a 396-amino-acid chain: Stearoyl-[acyl-carrier-protein] 9-desaturase 2, chloroplastic (396 aa).

The N-terminal 32 residues, 1–32 (MALRPNDVTLRLTPPLAAAARRNRRAAAGGVR), are a transit peptide targeting the chloroplast. Residues Glu-138, Glu-176, His-179, Glu-229, Glu-262, and His-265 each contribute to the Fe cation site.

The protein belongs to the fatty acid desaturase type 2 family. Homodimer. Requires Fe(2+) as cofactor.

It is found in the plastid. The protein localises to the chloroplast. It catalyses the reaction octadecanoyl-[ACP] + 2 reduced [2Fe-2S]-[ferredoxin] + O2 + 2 H(+) = (9Z)-octadecenoyl-[ACP] + 2 oxidized [2Fe-2S]-[ferredoxin] + 2 H2O. It participates in lipid metabolism; fatty acid metabolism. Converts stearoyl-ACP to oleoyl-ACP by introduction of a cis double bond between carbons 9 and 10 of the acyl chain. Required for the repression of the salicylic acid (SA) signaling pathway. In Oryza sativa subsp. indica (Rice), this protein is Stearoyl-[acyl-carrier-protein] 9-desaturase 2, chloroplastic (SSI2).